A 431-amino-acid polypeptide reads, in one-letter code: C2H2 type master regulator of conidiophore development brlA (431 aa).

Disordered regions lie at residues 29–51, 211–275, and 287–306; these read MTSS…SHGS, TPQQ…SEEY, and IRTH…VRSN. Over residues 30-48 the composition is skewed to low complexity; that stretch reads TSSFSPLESPTPTPTSLYS. A compositionally biased stretch (polar residues) spans 225–265; it reads PSSNYSDFPASLQTFKPHTPSTPVRSLSLGTPRSDTPQSRM. Residues 287-302 are compositionally biased toward basic residues; it reads IRTHRQPSRKPSKKQL. C2H2-type zinc fingers lie at residues 321-345 and 351-376; these read FKCK…MKSH and HVCW…TKTH. Positions 390–412 are disordered; it reads DETSPDYDPEFRGQLTPDGRPIY.

It localises to the nucleus. In terms of biological role, brlA, abaA and wetA are pivotal regulators of conidiophore development and conidium maturation. They act individually and together to regulate their own expression and that of numerous other sporulation-specific genes. Binds promoters of target genes at brlA response elements (BREs) containing the conserved sequence 5'-(C/A)(A/G)AGGG(G/A)-3'. Regulates the expression levels of seven secondary metabolism gene clusters including a down-regulated cluster putatively involved in the biosynthesis of the mycotoxins roquefortine C and meleagrin. Negatively regulates the expression of cellulase genes. This is C2H2 type master regulator of conidiophore development brlA from Penicillium oxalicum (strain 114-2 / CGMCC 5302) (Penicillium decumbens).